A 384-amino-acid polypeptide reads, in one-letter code: Spermidine/putrescine import ATP-binding protein PotA (384 aa).

The 233-residue stretch at 6-238 (ITFNNVSKTF…PINHFVANFI (233 aa)) folds into the ABC transporter domain. An ATP-binding site is contributed by 40 to 47 (GASGSGKS).

It belongs to the ABC transporter superfamily. Spermidine/putrescine importer (TC 3.A.1.11.1) family. In terms of assembly, the complex is composed of two ATP-binding proteins (PotA), two transmembrane proteins (PotB and PotC) and a solute-binding protein (PotD).

The protein localises to the cell membrane. The enzyme catalyses ATP + H2O + polyamine-[polyamine-binding protein]Side 1 = ADP + phosphate + polyamineSide 2 + [polyamine-binding protein]Side 1.. In terms of biological role, part of the ABC transporter complex PotABCD involved in spermidine/putrescine import. Responsible for energy coupling to the transport system. The sequence is that of Spermidine/putrescine import ATP-binding protein PotA from Streptococcus pyogenes serotype M28 (strain MGAS6180).